Here is a 347-residue protein sequence, read N- to C-terminus: Gibberellin 3-beta-dioxygenase 2 (347 aa).

The 105-residue stretch at 197-301 (DFQGTQAVIQ…RFSMAYLWGP (105 aa)) folds into the Fe2OG dioxygenase domain. 3 residues coordinate Fe cation: His-225, Asp-227, and His-282. Arg-292 is a catalytic residue. Residue Arg-292 participates in 2-oxoglutarate binding.

This sequence belongs to the iron/ascorbate-dependent oxidoreductase family. GA3OX subfamily. It depends on L-ascorbate as a cofactor. Requires Fe(2+) as cofactor. Highly expressed in seedlings but also expressed in roots, leaves, stems, flowers, siliques and seeds. Detected predominantly in the hypocotyl and roots of young seedlings and in the petioles and vasculature of leaves. Not expressed in the shoot apical meristem, but found in the elongation zone, the quiescent center cells and the columella cells of the root tips. Found in the cortex and the endodermis of the embryo axis in germinating seeds.

It carries out the reaction gibberellin A20 + 2-oxoglutarate + O2 = gibberellin A1 + succinate + CO2. It participates in plant hormone biosynthesis; gibberellin biosynthesis. Its function is as follows. Converts the inactive gibberellin (GA) precursors GA9 and GA20 in the bioactives gibberellins GA4 and GA1. Involved in the production of bioactive GA for vegetative growth and development. The protein is Gibberellin 3-beta-dioxygenase 2 of Arabidopsis thaliana (Mouse-ear cress).